The sequence spans 346 residues: MATILSIETSCDETAVAIVKNRNIYSNIVASQIDLHQTYGGVVPEVASRQHLETINPCLEQAFIEANLNWSDIDGIAATVAPGLIGALMVGVSAAKTLSILYQKPFIGVHHLEGHIYASYLSEPDLQPPFLCLLVSGGHTSLIYVKDCGIYEMLGSTRDDAAGEAFDKVARLLQLSYPGGPIIDRMAQTGNPHAFSLPEGRVSLPEGGYHPYDSSFSGLKTAVLRLVQKLEQDHLSLPVHDLAASFQETVARSLTKKTITCALDYNLTTIAVGGGVGANSALRKHLTSAATEHNLKVFFPPLKLCTDNAAMIGCAAADHFNRGHFSPLSIGVQSRLPITEVMKLYQ.

Positions 111 and 115 each coordinate Fe cation. Residues 134-138 (LVSGG), aspartate 167, glycine 180, aspartate 184, and asparagine 279 contribute to the substrate site. Aspartate 307 is a binding site for Fe cation.

This sequence belongs to the KAE1 / TsaD family. Fe(2+) serves as cofactor.

The protein resides in the cytoplasm. The catalysed reaction is L-threonylcarbamoyladenylate + adenosine(37) in tRNA = N(6)-L-threonylcarbamoyladenosine(37) in tRNA + AMP + H(+). Functionally, required for the formation of a threonylcarbamoyl group on adenosine at position 37 (t(6)A37) in tRNAs that read codons beginning with adenine. Is involved in the transfer of the threonylcarbamoyl moiety of threonylcarbamoyl-AMP (TC-AMP) to the N6 group of A37, together with TsaE and TsaB. TsaD likely plays a direct catalytic role in this reaction. This Gloeothece citriformis (strain PCC 7424) (Cyanothece sp. (strain PCC 7424)) protein is tRNA N6-adenosine threonylcarbamoyltransferase.